The following is a 357-amino-acid chain: SPbeta prophage-derived pesticidal crystal protein-like YokG (357 aa).

It belongs to the cry6A endotoxin family.

The chain is SPbeta prophage-derived pesticidal crystal protein-like YokG (yokG) from Bacillus subtilis (strain 168).